Consider the following 175-residue polypeptide: Peptide deformylase (175 aa).

Fe cation is bound by residues Cys98 and His140. Residue Glu141 is part of the active site. Residue His144 participates in Fe cation binding.

The protein belongs to the polypeptide deformylase family. Fe(2+) is required as a cofactor.

The enzyme catalyses N-terminal N-formyl-L-methionyl-[peptide] + H2O = N-terminal L-methionyl-[peptide] + formate. In terms of biological role, removes the formyl group from the N-terminal Met of newly synthesized proteins. Requires at least a dipeptide for an efficient rate of reaction. N-terminal L-methionine is a prerequisite for activity but the enzyme has broad specificity at other positions. The polypeptide is Peptide deformylase (Bradyrhizobium sp. (strain ORS 278)).